A 284-amino-acid polypeptide reads, in one-letter code: Nucleoid occlusion protein (284 aa).

Residues 143-162 constitute a DNA-binding region (H-T-H motif); the sequence is EALAQRVGKSQSAIANKMRL.

It belongs to the ParB family.

It is found in the cytoplasm. The protein localises to the nucleoid. In terms of biological role, effects nucleoid occlusion by binding relatively nonspecifically to DNA and preventing the assembly of the division machinery in the vicinity of the nucleoid, especially under conditions that disturb the cell cycle. It helps to coordinate cell division and chromosome segregation by preventing the formation of the Z ring through the nucleoid, which would cause chromosome breakage. The protein is Nucleoid occlusion protein of Listeria innocua serovar 6a (strain ATCC BAA-680 / CLIP 11262).